Consider the following 432-residue polypeptide: Adenylosuccinate synthetase (432 aa).

GTP contacts are provided by residues 13–19 (GDEGKGK) and 41–43 (GHT). The Proton acceptor role is filled by D14. Mg(2+) contacts are provided by D14 and G41. Residues 14–17 (DEGK), 39–42 (NAGH), T131, R145, Q226, T241, and R305 each bind IMP. H42 functions as the Proton donor in the catalytic mechanism. Residue 301–307 (SVTGRAR) coordinates substrate. GTP contacts are provided by residues R307, 333–335 (KLD), and 416–418 (STG).

It belongs to the adenylosuccinate synthetase family. Homodimer. It depends on Mg(2+) as a cofactor.

The protein localises to the cytoplasm. The catalysed reaction is IMP + L-aspartate + GTP = N(6)-(1,2-dicarboxyethyl)-AMP + GDP + phosphate + 2 H(+). Its pathway is purine metabolism; AMP biosynthesis via de novo pathway; AMP from IMP: step 1/2. Plays an important role in the de novo pathway of purine nucleotide biosynthesis. Catalyzes the first committed step in the biosynthesis of AMP from IMP. The sequence is that of Adenylosuccinate synthetase from Neisseria meningitidis serogroup A / serotype 4A (strain DSM 15465 / Z2491).